We begin with the raw amino-acid sequence, 509 residues long: DNA primase DnaG (509 aa).

Residues 167–253 (DAIVVVEGRA…CVEDLARHEV (87 aa)) enclose the Toprim domain. E173, D215, and D217 together coordinate Mg(2+). The tract at residues 267-411 (KQAASDDADP…ASTDEQPKTL (145 aa)) is disordered. Low complexity-rich tracts occupy residues 313–331 (PVSS…ETAA) and 383–402 (ESTA…AAGA).

It belongs to the archaeal DnaG primase family. Forms a ternary complex with MCM helicase and DNA. The cofactor is Mg(2+).

It carries out the reaction ssDNA + n NTP = ssDNA/pppN(pN)n-1 hybrid + (n-1) diphosphate.. Its function is as follows. RNA polymerase that catalyzes the synthesis of short RNA molecules used as primers for DNA polymerase during DNA replication. This Natronomonas pharaonis (strain ATCC 35678 / DSM 2160 / CIP 103997 / JCM 8858 / NBRC 14720 / NCIMB 2260 / Gabara) (Halobacterium pharaonis) protein is DNA primase DnaG.